The following is a 173-amino-acid chain: Ribosome maturation factor RimM (173 aa).

Residues 94 to 166 (VQEEPYIDII…KIIVELPMGF (73 aa)) form the PRC barrel domain.

Belongs to the RimM family. As to quaternary structure, binds ribosomal protein uS19.

The protein localises to the cytoplasm. Functionally, an accessory protein needed during the final step in the assembly of 30S ribosomal subunit, possibly for assembly of the head region. Essential for efficient processing of 16S rRNA. May be needed both before and after RbfA during the maturation of 16S rRNA. It has affinity for free ribosomal 30S subunits but not for 70S ribosomes. The polypeptide is Ribosome maturation factor RimM (Amoebophilus asiaticus (strain 5a2)).